Here is a 363-residue protein sequence, read N- to C-terminus: Protein TAX-1 (363 aa).

The required for localization to the flagellum and for flagellar motility stretch occupies residues arginine 129–glutamine 363. TPR repeat units lie at residues alanine 157 to methionine 190 and threonine 199 to histidine 232.

Interacts with TTC29.

It is found in the cytoplasm. The protein resides in the cytoskeleton. The protein localises to the flagellum axoneme. Required for flagellum motility. The polypeptide is Protein TAX-1 (Trypanosoma brucei brucei (strain 927/4 GUTat10.1)).